A 350-amino-acid polypeptide reads, in one-letter code: Chorismate synthase (350 aa).

NADP(+) is bound at residue Arg48. FMN is bound by residues 125–127 (RSS), Gly277, 292–296 (KPIPS), and Arg318.

It belongs to the chorismate synthase family. Homotetramer. FMNH2 serves as cofactor.

It carries out the reaction 5-O-(1-carboxyvinyl)-3-phosphoshikimate = chorismate + phosphate. It functions in the pathway metabolic intermediate biosynthesis; chorismate biosynthesis; chorismate from D-erythrose 4-phosphate and phosphoenolpyruvate: step 7/7. In terms of biological role, catalyzes the anti-1,4-elimination of the C-3 phosphate and the C-6 proR hydrogen from 5-enolpyruvylshikimate-3-phosphate (EPSP) to yield chorismate, which is the branch point compound that serves as the starting substrate for the three terminal pathways of aromatic amino acid biosynthesis. This reaction introduces a second double bond into the aromatic ring system. The protein is Chorismate synthase of Maridesulfovibrio salexigens (strain ATCC 14822 / DSM 2638 / NCIMB 8403 / VKM B-1763) (Desulfovibrio salexigens).